The following is a 269-amino-acid chain: Phosphate import ATP-binding protein PstB (269 aa).

Residues Ile21–Ile264 enclose the ABC transporter domain. Residue Gly55 to Thr62 participates in ATP binding.

Belongs to the ABC transporter superfamily. Phosphate importer (TC 3.A.1.7) family. As to quaternary structure, the complex is composed of two ATP-binding proteins (PstB), two transmembrane proteins (PstC and PstA) and a solute-binding protein (PstS).

It is found in the cell membrane. The enzyme catalyses phosphate(out) + ATP + H2O = ADP + 2 phosphate(in) + H(+). Part of the ABC transporter complex PstSACB involved in phosphate import. Responsible for energy coupling to the transport system. This is Phosphate import ATP-binding protein PstB from Mycoplasma capricolum subsp. capricolum (strain California kid / ATCC 27343 / NCTC 10154).